A 296-amino-acid chain; its full sequence is 4-diphosphocytidyl-2-C-methyl-D-erythritol kinase (296 aa).

K14 is a catalytic residue. Residue P97 to S107 participates in ATP binding. D139 is a catalytic residue.

It belongs to the GHMP kinase family. IspE subfamily.

The catalysed reaction is 4-CDP-2-C-methyl-D-erythritol + ATP = 4-CDP-2-C-methyl-D-erythritol 2-phosphate + ADP + H(+). It participates in isoprenoid biosynthesis; isopentenyl diphosphate biosynthesis via DXP pathway; isopentenyl diphosphate from 1-deoxy-D-xylulose 5-phosphate: step 3/6. Functionally, catalyzes the phosphorylation of the position 2 hydroxy group of 4-diphosphocytidyl-2C-methyl-D-erythritol. The chain is 4-diphosphocytidyl-2-C-methyl-D-erythritol kinase from Polynucleobacter necessarius subsp. necessarius (strain STIR1).